The chain runs to 95 residues: Large ribosomal subunit protein bL27 (95 aa).

A disordered region spans residues 1–21; it reads MAHKKGASSSRNGRDSNAQRL. The segment covering 7-19 has biased composition (polar residues); it reads ASSSRNGRDSNAQ.

This sequence belongs to the bacterial ribosomal protein bL27 family.

The sequence is that of Large ribosomal subunit protein bL27 from Parafrankia sp. (strain EAN1pec).